Consider the following 139-residue polypeptide: Ribulose bisphosphate carboxylase small subunit (139 aa).

Belongs to the RuBisCO small chain family. As to quaternary structure, heterohexadecamer of 8 large and 8 small subunits.

It is found in the plastid. It localises to the chloroplast. RuBisCO catalyzes two reactions: the carboxylation of D-ribulose 1,5-bisphosphate, the primary event in carbon dioxide fixation, as well as the oxidative fragmentation of the pentose substrate in the photorespiration process. Both reactions occur simultaneously and in competition at the same active site. Although the small subunit is not catalytic it is essential for maximal activity. The chain is Ribulose bisphosphate carboxylase small subunit from Pylaiella littoralis (Seaweed).